An 831-amino-acid chain; its full sequence is Pleckstrin homology-like domain family B member 1 (831 aa).

Positions 1-11 (LTLGARGRRTR) are enriched in basic residues. Residues 1–73 (LTLGARGRRT…PIPRERKNSI (73 aa)) form a disordered region. Arg6 is subject to Omega-N-methylarginine. Phosphoserine is present on residues Ser12 and Ser14. Thr16 is subject to Phosphothreonine. Phosphoserine is present on residues Ser27, Ser33, Ser45, Ser49, Ser57, Ser72, Ser77, and Ser175. Over residues 39–51 (GSLTGASPRQSPH) the composition is skewed to polar residues. Disordered stretches follow at residues 160-209 (RSGE…LQGE) and 416-465 (NGDM…QNGT). Positions 174 to 188 (ESMERSDEENLKEEC) are enriched in basic and acidic residues. Residues 180–306 (DEENLKEECS…TETKLFEDLE (127 aa)) are a coiled coil. 2 positions are modified to phosphoserine: Ser421 and Ser467. Residues 421-442 (SPLPRTRSGPLPSSSGSSSSSS) are compositionally biased toward low complexity. The segment at 584-603 (SMETSISTGGNSACSPDNMS) is disordered. A coiled-coil region spans residues 610-676 (MGKIEEMEKM…QQLVEKEVKL (67 aa)). In terms of domain architecture, PH spans 721-824 (SKVCRGYLIK…WMDVIVTGAE (104 aa)).

The sequence is that of Pleckstrin homology-like domain family B member 1 (Phldb1) from Rattus norvegicus (Rat).